An 839-amino-acid chain; its full sequence is Elongation factor 2 (839 aa).

Positions 17–248 (ENIRNMSVIA…MGRLWGDSYF (232 aa)) constitute a tr-type G domain. Residues 26–33 (AHVDHGKT), 156–159 (NKVD), and 211–213 (SGL) contribute to the GTP site. Position 698 is a diphthamide (H698).

The protein belongs to the TRAFAC class translation factor GTPase superfamily. Classic translation factor GTPase family. EF-G/EF-2 subfamily. Post-translationally, phosphorylation by EF-2 kinase completely inactivates EF-2.

Its subcellular location is the cytoplasm. The catalysed reaction is GTP + H2O = GDP + phosphate + H(+). Catalyzes the GTP-dependent ribosomal translocation step during translation elongation. During this step, the ribosome changes from the pre-translocational (PRE) to the post-translocational (POST) state as the newly formed A-site-bound peptidyl-tRNA and P-site-bound deacylated tRNA move to the P and E sites, respectively. Catalyzes the coordinated movement of the two tRNA molecules, the mRNA and conformational changes in the ribosome. The sequence is that of Elongation factor 2 (efbA) from Dictyostelium discoideum (Social amoeba).